A 112-amino-acid chain; its full sequence is Small ribosomal subunit protein bS6 (112 aa).

Belongs to the bacterial ribosomal protein bS6 family.

Its function is as follows. Binds together with bS18 to 16S ribosomal RNA. In Chlamydia caviae (strain ATCC VR-813 / DSM 19441 / 03DC25 / GPIC) (Chlamydophila caviae), this protein is Small ribosomal subunit protein bS6.